A 671-amino-acid chain; its full sequence is DNA ligase (671 aa).

NAD(+) is bound by residues 32 to 36, 81 to 82, and glutamate 113; these read DAEYD and SL. Lysine 115 acts as the N6-AMP-lysine intermediate in catalysis. Arginine 136, glutamate 173, lysine 290, and lysine 314 together coordinate NAD(+). The Zn(2+) site is built by cysteine 408, cysteine 411, cysteine 426, and cysteine 432. In terms of domain architecture, BRCT spans 593–671; the sequence is EIDSPFAGKT…EAEMIRLLGA (79 aa).

This sequence belongs to the NAD-dependent DNA ligase family. LigA subfamily. Mg(2+) serves as cofactor. Mn(2+) is required as a cofactor.

It catalyses the reaction NAD(+) + (deoxyribonucleotide)n-3'-hydroxyl + 5'-phospho-(deoxyribonucleotide)m = (deoxyribonucleotide)n+m + AMP + beta-nicotinamide D-nucleotide.. In terms of biological role, DNA ligase that catalyzes the formation of phosphodiester linkages between 5'-phosphoryl and 3'-hydroxyl groups in double-stranded DNA using NAD as a coenzyme and as the energy source for the reaction. It is essential for DNA replication and repair of damaged DNA. The chain is DNA ligase from Salmonella paratyphi B (strain ATCC BAA-1250 / SPB7).